The primary structure comprises 587 residues: Potassium-transporting ATPase potassium-binding subunit (587 aa).

Transmembrane regions (helical) follow at residues 1 to 21, 60 to 80, 89 to 109, and 131 to 151; these read MSTSVAGVLAVALLVAALWVT, PVYARSVLAFSLVSVLLLYLL, LNLGFGAVGPALAWNTAVSFM, and GLAVQNFVSAAVGIAVAIAVV. The interval 162–188 is disordered; that stretch reads AVGGPGGPNGPGGPGGPNGPGAGSRDD. Over residues 164–183 the composition is skewed to gly residues; the sequence is GGPGGPNGPGGPGGPNGPGA. The next 7 helical transmembrane spans lie at 208 to 228, 280 to 300, 314 to 334, 409 to 429, 449 to 469, 514 to 534, and 557 to 577; these read IRILLPVCVIAAIVLVAGGAI, PTSWTNLVEIFLLLAIAFSLP, LAIVAVMAVLALGSFAVNAAF, GLYGMLVLAVVTVFVAGLMIG, LYFLATPAIALLGTGVAMGLP, ALGLAMLFGRLLPMLLVLGMA, and FAGMLGAIALIIVALTFFPAL.

The protein belongs to the KdpA family. The system is composed of three essential subunits: KdpA, KdpB and KdpC.

The protein resides in the cell membrane. In terms of biological role, part of the high-affinity ATP-driven potassium transport (or Kdp) system, which catalyzes the hydrolysis of ATP coupled with the electrogenic transport of potassium into the cytoplasm. This subunit binds the extracellular potassium ions and delivers the ions to the membrane domain of KdpB through an intramembrane tunnel. The protein is Potassium-transporting ATPase potassium-binding subunit of Frankia alni (strain DSM 45986 / CECT 9034 / ACN14a).